The sequence spans 125 residues: Large ribosomal subunit protein bL21 (125 aa).

The segment covering 75 to 89 (FKKRRRQNSKRKRGH) has biased composition (basic residues). 2 disordered regions span residues 75-94 (FKKRRRQNSKRKRGHRQDLT) and 103-125 (AGGASPAAAAASSETPAASAPEA). Over residues 106–125 (ASPAAAAASSETPAASAPEA) the composition is skewed to low complexity.

It belongs to the bacterial ribosomal protein bL21 family. As to quaternary structure, part of the 50S ribosomal subunit. Contacts protein L20.

Its function is as follows. This protein binds to 23S rRNA in the presence of protein L20. This is Large ribosomal subunit protein bL21 from Methylocella silvestris (strain DSM 15510 / CIP 108128 / LMG 27833 / NCIMB 13906 / BL2).